A 1059-amino-acid chain; its full sequence is Disks large-associated protein 2 (1059 aa).

2 disordered regions span residues glycine 31 to isoleucine 56 and threonine 244 to threonine 311. Positions threonine 244 to lysine 261 are enriched in polar residues. Positions serine 262–glutamine 271 are enriched in basic and acidic residues. The span at serine 272–glutamate 285 shows a compositional bias: basic residues. 4 positions are modified to phosphoserine: serine 302, serine 308, serine 390, and serine 456. 2 disordered regions span residues glycine 446–arginine 466 and valine 632–aspartate 669. Residues valine 632 to tyrosine 645 show a composition bias toward polar residues. Phosphoserine occurs at positions 667, 670, 673, and 720. The interval valine 723–histidine 756 is disordered. Residue threonine 743 is modified to Phosphothreonine. At serine 745 the chain carries Phosphoserine. Residues threonine 747–histidine 756 show a composition bias toward basic and acidic residues. Phosphoserine occurs at positions 776, 811, 983, and 1012. The tract at residues glutamate 985–arginine 1024 is disordered. Positions isoleucine 1007–arginine 1024 are enriched in basic and acidic residues.

It belongs to the SAPAP family. In terms of assembly, interacts with DLG4/PSD-95. As to expression, expressed in various brain areas.

It is found in the cell membrane. Its subcellular location is the postsynaptic density. The protein resides in the synapse. In terms of biological role, may play a role in the molecular organization of synapses and neuronal cell signaling. Could be an adapter protein linking ion channel to the subsynaptic cytoskeleton. May induce enrichment of PSD-95/SAP90 at the plasma membrane. The polypeptide is Disks large-associated protein 2 (Rattus norvegicus (Rat)).